The chain runs to 39 residues: U-limacoditoxin(13)-As54 (39 aa).

Positions M1–C23 are cleaved as a signal peptide. F37 is subject to Phenylalanine amide.

The protein belongs to the FARP (FMRFamide related peptide) family. As to expression, expressed by the venom secretory cell of the spine. The spine is a cuticular structure containing a single large nucleated venom-secreting cell at its base. It is an independent unit capable of producing, storing and injecting venom. On the back of A.stimulea caterpillars, spines are grouped together by 50 to 100 to form scoli, of which there are eight.

The protein localises to the secreted. Functionally, strongly activates (at 30 uM) the human neuropeptide FF receptor 1 (NPFF1R), a G-protein coupled receptor, with an effect that is equipotent to the endogenous RFRP-1 ligand in activating NPFFR1. Is toxic when injected into Drosophila melanogaster. Also shows a moderate anthelmintic activity against the parasitic nematode H.contortus (drug susceptible Kirby isolate) (IC(50)=20.1 uM). In Acharia stimulea (Saddleback caterpillar moth), this protein is U-limacoditoxin(13)-As54.